The chain runs to 148 residues: Large-conductance mechanosensitive channel (148 aa).

Helical transmembrane passes span 21 to 41 (IDLA…DSVV), 45 to 65 (IMPL…KFLV), and 92 to 112 (GNFL…FIIV).

Belongs to the MscL family. Homopentamer.

The protein localises to the cell inner membrane. In terms of biological role, channel that opens in response to stretch forces in the membrane lipid bilayer. May participate in the regulation of osmotic pressure changes within the cell. This is Large-conductance mechanosensitive channel from Bordetella petrii (strain ATCC BAA-461 / DSM 12804 / CCUG 43448).